The sequence spans 294 residues: MASTAPFAKMNGIGNEIIVADMRGRADQVTAAAALALNGDAATRFDQIMAIHDARTPGTAYYVDILNSDGTSAQACGNGMRCVVQALAAETGQKTFTFETRAGILNAREHADGTISVDMGMPHFGWQEIPLAEEFRDTRMIELQIGPIDAPVLHSPSAVSMGNPHAIFWVDRDVWSYELERFGPLLENHPIFPERANITIAQVTSPESMIIRTWERGAGLTKACGSAACASVVAAARTRRTGRSVNLLTPGGGTLHVEWLDNDHVILTGAAEWEFSGSFDPSTGTWARDTESAA.

Residues Asn15, Gln47, and Asn67 each coordinate substrate. The active-site Proton donor is Cys76. Residues 77–78, Asn163, Asn197, and 215–216 each bind substrate; these read GN and ER. The active-site Proton acceptor is Cys224. 225–226 contributes to the substrate binding site; sequence GS.

It belongs to the diaminopimelate epimerase family. In terms of assembly, homodimer.

The protein resides in the cytoplasm. The enzyme catalyses (2S,6S)-2,6-diaminopimelate = meso-2,6-diaminopimelate. It participates in amino-acid biosynthesis; L-lysine biosynthesis via DAP pathway; DL-2,6-diaminopimelate from LL-2,6-diaminopimelate: step 1/1. Catalyzes the stereoinversion of LL-2,6-diaminopimelate (L,L-DAP) to meso-diaminopimelate (meso-DAP), a precursor of L-lysine and an essential component of the bacterial peptidoglycan. This Mesorhizobium japonicum (strain LMG 29417 / CECT 9101 / MAFF 303099) (Mesorhizobium loti (strain MAFF 303099)) protein is Diaminopimelate epimerase.